Consider the following 180-residue polypeptide: UPF0340 protein llmg_0465 (180 aa).

Belongs to the UPF0340 family.

This chain is UPF0340 protein llmg_0465, found in Lactococcus lactis subsp. cremoris (strain MG1363).